The sequence spans 475 residues: Equilibrative nucleoside transporter 3 (475 aa).

The Cytoplasmic portion of the chain corresponds to 1-51; it reads MAFASEDIAYHSSNAVYRVPSNRHEADQEALLGKPLDYPAPGLQRPEDRFN. The residue at position 21 (Ser21) is a Phosphoserine. Residues 31–32 carry the Dileucine internalization motif motif; that stretch reads LL. A helical transmembrane segment spans residues 52–72; it reads GAYIIFFCLGIGGLLPWNFFV. At 73–105 the chain is on the extracellular side; sequence TAKEYWAFKLRNCSSPASGKDPEDADILNYFES. A glycan (N-linked (GlcNAc...) asparagine) is linked at Asn84. The chain crosses the membrane as a helical span at residues 106 to 126; that stretch reads YLAVASTVPSLLFLVANFLLV. Residues 127–132 are Cytoplasmic-facing; the sequence is NRIRVH. Residues 133–153 form a helical membrane-spanning segment; the sequence is VRVLASLSVSLAIFVVMAVLV. Residues 154–162 are Extracellular-facing; it reads RVDTSSWTR. A helical transmembrane segment spans residues 163 to 183; sequence GFFSIAMACMAIISSSSTIFN. At 184-199 the chain is on the cytoplasmic side; that stretch reads SSVYGLTGSFPMRNAQ. The chain crosses the membrane as a helical span at residues 200–220; it reads ALISGGAMGGTVSAVASLVDL. Residues 221 to 230 are Extracellular-facing; the sequence is AASSDVRDSA. The helical transmembrane segment at 231–251 threads the bilayer; it reads LAFFLTAAVFLGLCVGLYLLL. At 252-305 the chain is on the cytoplasmic side; sequence PQLEYARYYMRPVVPIHVFSSEDSPPRDAPSTSSVAPASRAVHTPPLGPILKKT. The segment at 272–291 is disordered; that stretch reads SEDSPPRDAPSTSSVAPASR. A helical membrane pass occupies residues 306–326; that stretch reads AGLGFCAVFLYFITALIFPAI. The Extracellular portion of the chain corresponds to 327-340; the sequence is STNIQPMHKGTGSP. Residues 341 to 361 traverse the membrane as a helical segment; the sequence is WTSKFYVPLTVFLLFNFADLC. At 362-377 the chain is on the cytoplasmic side; the sequence is GRQVTAWIQVPGPRSK. The chain crosses the membrane as a helical span at residues 378-398; sequence LLPILAVSRVCLVPLFLLCNY. At 399-414 the chain is on the extracellular side; that stretch reads QPRSHLTLVLFQSDIY. Residues 415–437 form a helical membrane-spanning segment; sequence PILFTCLLGLSNGYLSTLVLMYG. Topologically, residues 438 to 450 are cytoplasmic; the sequence is PKIVPRELAEATS. A helical membrane pass occupies residues 451–471; it reads VVMLFYMSLGLMLGSACAALL. The Extracellular portion of the chain corresponds to 472–475; that stretch reads EHFI.

Belongs to the SLC29A/ENT transporter (TC 2.A.57) family. As to expression, widely expressed. Highest levels in heart and liver (at protein level).

Its subcellular location is the lysosome membrane. It localises to the late endosome membrane. It is found in the mitochondrion membrane. The protein localises to the cell membrane. It carries out the reaction adenosine(in) = adenosine(out). The catalysed reaction is guanosine(in) = guanosine(out). The enzyme catalyses inosine(in) = inosine(out). It catalyses the reaction uridine(out) = uridine(in). It carries out the reaction cytidine(in) = cytidine(out). The catalysed reaction is thymidine(in) = thymidine(out). The enzyme catalyses 2'-deoxyadenosine(in) = 2'-deoxyadenosine(out). It catalyses the reaction 2'-deoxycytidine(in) = 2'-deoxycytidine(out). It carries out the reaction guanine(out) = guanine(in). The catalysed reaction is uracil(in) = uracil(out). The enzyme catalyses (R)-noradrenaline(out) = (R)-noradrenaline(in). It catalyses the reaction dopamine(out) = dopamine(in). It carries out the reaction serotonin(out) = serotonin(in). The catalysed reaction is tyramine(in) = tyramine(out). The enzyme catalyses ATP(in) = ATP(out). Uniporter that mediates the facilitative transport of nucleoside across lysosomal and mitochondrial membranes. Functions as a non-electrogenic Na(+)-independent transporter. Substrate transport is pH-dependent and enhanced under acidic condition, probably reflecting the location of the transporter in acidic intracellular compartments. Proton is not a cotransporting ion but most likely change the ionization state of the transporter which dictates transport-permissible/impermissible conformation for nucleoside translocation. May direct the nucleoside transport from lysosomes to cytosol or cytosol to mitochondria to facilitate the fundamental function of salvage synthesis of nucleic acids. Involved in the transport of nucleosides (adenosine, guanosine, uridine, thymidine, cytidine and inosine) and deoxynucleosides (deoxyadenosine, deoxycytidine). Also mediates transport of purine nucleobases (adenine, guanine) and pyrimidine nucleobases (uracil). Also able to transport monoamine neurotransmitters dopamine, serotonin, noradrenaline and tyramine. Capable of transporting ATP. Mediates nucleoside export from lysosomes in macrophages, which regulates macrophage functions and numbers. The protein is Equilibrative nucleoside transporter 3 of Rattus norvegicus (Rat).